Here is a 141-residue protein sequence, read N- to C-terminus: Photosystem II protein PSBR, chloroplastic (141 aa).

Residues 1–27 (MATMQISAKGLAPLRPRVSSRRVVKPV) constitute a chloroplast transit peptide. Thr34 and Thr37 each carry phosphothreonine. Position 43 is a phosphoserine (Ser43). A helical membrane pass occupies residues 114–134 (GLIAWAGLVLVLLAVGVNLII).

It belongs to the psbR family.

Its subcellular location is the plastid. It is found in the chloroplast thylakoid membrane. Associated with the oxygen-evolving complex of photosystem II (PSII). Is required for the stable binding of LHCSR3 to PSII-LHCII supercomplexes and is essential for efficient energy-dependent quenching and the integrity of the PSII-LHCII-LHCSR3 supercomplex under continuous high light. The sequence is that of Photosystem II protein PSBR, chloroplastic from Chlamydomonas reinhardtii (Chlamydomonas smithii).